The primary structure comprises 487 residues: N-succinylglutamate 5-semialdehyde dehydrogenase (487 aa).

Position 221 to 226 (221 to 226 (GSSRTG)) interacts with NAD(+). Residues E244 and C278 contribute to the active site.

This sequence belongs to the aldehyde dehydrogenase family. AstD subfamily.

It catalyses the reaction N-succinyl-L-glutamate 5-semialdehyde + NAD(+) + H2O = N-succinyl-L-glutamate + NADH + 2 H(+). It participates in amino-acid degradation; L-arginine degradation via AST pathway; L-glutamate and succinate from L-arginine: step 4/5. Catalyzes the NAD-dependent reduction of succinylglutamate semialdehyde into succinylglutamate. The protein is N-succinylglutamate 5-semialdehyde dehydrogenase (astD) of Pseudomonas aeruginosa (strain ATCC 15692 / DSM 22644 / CIP 104116 / JCM 14847 / LMG 12228 / 1C / PRS 101 / PAO1).